The following is a 296-amino-acid chain: DNA primase small subunit PriS (296 aa).

Residues Asp-82, Asp-84, and Asp-191 contribute to the active site.

Belongs to the eukaryotic-type primase small subunit family. Heterodimer of a small subunit (PriS) and a large subunit (PriL). Mg(2+) serves as cofactor. Mn(2+) is required as a cofactor.

Functionally, catalytic subunit of DNA primase, an RNA polymerase that catalyzes the synthesis of short RNA molecules used as primers for DNA polymerase during DNA replication. The small subunit contains the primase catalytic core and has DNA synthesis activity on its own. Binding to the large subunit stabilizes and modulates the activity, increasing the rate of DNA synthesis while decreasing the length of the DNA fragments, and conferring RNA synthesis capability. The DNA polymerase activity may enable DNA primase to also catalyze primer extension after primer synthesis. May also play a role in DNA repair. This Methanopyrus kandleri (strain AV19 / DSM 6324 / JCM 9639 / NBRC 100938) protein is DNA primase small subunit PriS.